The following is a 351-amino-acid chain: Delta(7)-sterol 5(6)-desaturase (351 aa).

The next 3 membrane-spanning stretches (helical) occupy residues 88-108 (LSLF…VASF), 136-156 (GLGA…LELH), and 173-193 (VRLA…IYLL). The Fatty acid hydroxylase domain occupies 180–305 (LFFILFTDFG…FTTLWDRLGG (126 aa)). The Histidine box-1 signature appears at 194–198 (HRWLH). The short motif at 207 to 211 (HKKHH) is the Histidine box-2 element. The chain crosses the membrane as a helical span at residues 237-257 (HLFPMLFPLHKVSYLVLFTFV). The Histidine box-3 signature appears at 282–286 (HTVHH).

This sequence belongs to the sterol desaturase family. The cofactor is Fe cation.

It localises to the endoplasmic reticulum membrane. The enzyme catalyses a Delta(7)-sterol + 2 Fe(II)-[cytochrome b5] + O2 + 2 H(+) = a Delta(5),Delta(7)-sterol + 2 Fe(III)-[cytochrome b5] + 2 H2O. It functions in the pathway steroid metabolism; ergosterol biosynthesis; ergosterol from zymosterol: step 3/5. Its function is as follows. Catalyzes the introduction of a C-5 double bond in the B ring of ergosterol. May contribute to the regulation of ergosterol biosynthesis. The sequence is that of Delta(7)-sterol 5(6)-desaturase (ERG3) from Eremothecium gossypii (strain ATCC 10895 / CBS 109.51 / FGSC 9923 / NRRL Y-1056) (Yeast).